The primary structure comprises 357 residues: Glutamate 5-kinase (357 aa).

Lys7 contributes to the ATP binding site. Substrate is bound by residues Ser43, Asp130, and Asn142. ATP-binding positions include 162–163 and 205–211; these read TD and TGGMTTK. The region spanning 270–353 is the PUA domain; sequence EGELQLDAGA…PVVVHRDGLV (84 aa).

The protein belongs to the glutamate 5-kinase family.

It is found in the cytoplasm. It catalyses the reaction L-glutamate + ATP = L-glutamyl 5-phosphate + ADP. It functions in the pathway amino-acid biosynthesis; L-proline biosynthesis; L-glutamate 5-semialdehyde from L-glutamate: step 1/2. Its function is as follows. Catalyzes the transfer of a phosphate group to glutamate to form L-glutamate 5-phosphate. The sequence is that of Glutamate 5-kinase from Synechococcus sp. (strain CC9605).